The primary structure comprises 278 residues: Type II restriction enzyme AgeI (278 aa).

It belongs to the BsaWI type II restriction endonuclease family.

The catalysed reaction is Endonucleolytic cleavage of DNA to give specific double-stranded fragments with terminal 5'-phosphates.. A P subtype restriction enzyme that recognizes the double-stranded sequence 5'-ACCGGT-3' and cleaves after A-1. This Thalassovita gelatinovora (Thalassobius gelatinovorus) protein is Type II restriction enzyme AgeI (ageIR).